We begin with the raw amino-acid sequence, 158 residues long: Protein OPG060 (158 aa).

The protein belongs to the orthopoxvirus OPG058 family.

This Homo sapiens (Human) protein is Protein OPG060 (OPG060).